A 294-amino-acid polypeptide reads, in one-letter code: Eukaryotic translation initiation factor 3 subunit G (294 aa).

Basic and acidic residues predominate over residues M1–K22. Disordered regions lie at residues M1–K42 and G164–D211. Polar residues predominate over residues S30–K42. Residues G193–G205 show a composition bias toward gly residues. An RRM domain is found at L214–K292.

Belongs to the eIF-3 subunit G family. Component of the eukaryotic translation initiation factor 3 (eIF-3) complex.

It is found in the cytoplasm. Its function is as follows. RNA-binding component of the eukaryotic translation initiation factor 3 (eIF-3) complex, which is involved in protein synthesis of a specialized repertoire of mRNAs and, together with other initiation factors, stimulates binding of mRNA and methionyl-tRNAi to the 40S ribosome. The eIF-3 complex specifically targets and initiates translation of a subset of mRNAs involved in cell proliferation. This subunit can bind 18S rRNA. This chain is Eukaryotic translation initiation factor 3 subunit G, found in Yarrowia lipolytica (strain CLIB 122 / E 150) (Yeast).